The sequence spans 369 residues: Peptide chain release factor 2 (369 aa).

Gln-251 carries the N5-methylglutamine modification.

The protein belongs to the prokaryotic/mitochondrial release factor family. In terms of processing, methylated by PrmC. Methylation increases the termination efficiency of RF2.

The protein localises to the cytoplasm. Peptide chain release factor 2 directs the termination of translation in response to the peptide chain termination codons UGA and UAA. The sequence is that of Peptide chain release factor 2 from Chlamydia trachomatis serovar A (strain ATCC VR-571B / DSM 19440 / HAR-13).